The primary structure comprises 1262 residues: Synaptopodin-2 (1262 aa).

Residues 1 to 174 (MGTGDFICIS…PGSQEGHLVE (174 aa)) are interaction with VPS18. Residues 6-88 (FICISMTGGA…SLHLLIKRPT (83 aa)) form the PDZ domain. Polar residues-rich tracts occupy residues 89–105 (SGTS…TNHQ) and 246–260 (TSLT…SSGR). Disordered regions lie at residues 89–114 (SGTS…GPME) and 239–276 (PAPE…TGLP). Phosphoserine is present on residues S304, S323, and S324. The interval 323-363 (SSEGTEQGEDQRSGKDQGRPHKHRARHARLRRSESLSEKQV) is disordered. T327 carries the post-translational modification Phosphothreonine. The segment covering 331–341 (EDQRSGKDQGR) has biased composition (basic and acidic residues). Residues 342 to 352 (PHKHRARHARL) are compositionally biased toward basic residues. Over residues 353–363 (RRSESLSEKQV) the composition is skewed to basic and acidic residues. A Nuclear localization signal motif is present at residues 392 to 400 (KKRRRRARK). Interaction with ACTN2 stretches follow at residues 477-658 (MEML…FYDS), 659-922 (SEQI…PPVA), and 899-1153 (QSPT…NIEE). Disordered stretches follow at residues 503 to 576 (AQNE…GPQR) and 592 to 703 (NQTA…SPNP). Phosphoserine is present on residues S518, S543, S544, S546, and S549. F-actin binding regions lie at residues 530–658 (TSYQ…FYDS) and 659–801 (SEQI…VTAV). Positions 540-552 (RMQSSVSESSFQM) are enriched in low complexity. Positions 554–560 (RSLGSVP) are interaction with YWHAB. S558 is subject to Phosphoserine; by PKA. 2 stretches are compositionally biased toward polar residues: residues 558 to 569 (SVPQQNGFSGVS) and 592 to 606 (NQTA…SVTS). S599 bears the Phosphoserine mark. The interval 602 to 809 (QSVTSPIPDF…AVSSIKIAQP (208 aa)) is interaction with YWHAB. T605 carries the post-translational modification Phosphothreonine; by PKA and CaMK2. Residue S606 is modified to Phosphoserine. Pro residues-rich tracts occupy residues 609–625 (PDFP…PPPE) and 639–650 (AQPPPWPQPAPW). Positions 610 to 621 (DFPAPPPYSAVS) are interaction with BAG3. The PPPY motif signature appears at 614 to 617 (PPPY). A Phosphotyrosine modification is found at Y617. Phosphoserine is present on S621. The F-actin bundling activity stretch occupies residues 659–914 (SEQIASRDER…LPASWKYSSN (256 aa)). A phosphoserine mark is found at S700 and S724. 2 disordered regions span residues 741-799 (MQSS…PQVT) and 833-868 (VVSH…GMSG). The actin binding stretch occupies residues 745–898 (AKQKTPPPVA…DTVQAHTVRA (154 aa)). T749 is modified (phosphothreonine). Residues 756 to 782 (KPAVKTSSSSQPVAPVSPVWSPGVAPA) are compositionally biased toward low complexity. A phosphoserine mark is found at S772 and S776. The span at 786 to 799 (AFSTTNPPNPPQVT) shows a compositional bias: polar residues. The tract at residues 808–1153 (QPTCPPARPA…EAFRPRNIEE (346 aa)) is interaction with FLNC. S900, S904, and S908 each carry phosphoserine. Positions 933–957 (LAAIKSQPPGAQASKTSKKKGKKPL) are disordered. The interaction with ZYX stretch occupies residues 999–1018 (PAMKQALPPRQADIGSPTNA). Residues S1014, S1055, and S1090 each carry the phosphoserine modification.

This sequence belongs to the synaptopodin family. In terms of assembly, may self-associate in muscle cells under oxidative stress. Binds F-actin. Interacts with ACTN2; ACTN2 is proposed to anchor SYOP2 at Z lines in mature myocytes. Interacts with AKAP6, PPP3CA and CAMK2A. Interacts (phosphorylated form) with YWHAB; YWHAB competes with ACTN2 for interaction with SYNPO2. Interacts with KPNA2; mediating nuclear import of SYNOP2; dependent on interaction with YWHAB. Interacts with IPO13; may be implicated in SYNOP2 nuclear import. Interacts with ZYX, FLNC, ILK. Interacts with BAG3 (via WW 1 domain). May associate with the CASA complex consisting of HSPA8, HSPB8 and BAG3. Interacts with VPS18. Phosphorylated by PKA, and by CaMK2 at multiple sites. Dephosphorylated by calcineurin at Ser-558 and Thr-605; abrogating interaction with YWHAB and impairing nuclear import.

Its subcellular location is the nucleus. The protein localises to the cytoplasm. It is found in the cytoskeleton. It localises to the myofibril. The protein resides in the sarcomere. Its subcellular location is the z line. The protein localises to the cell junction. It is found in the focal adhesion. In terms of biological role, has an actin-binding and actin-bundling activity. Can induce the formation of F-actin networks. At the sarcomeric Z lines is proposed to act as adapter protein that links nascent myofibers to the sarcolemma via ZYX and may play a role in early assembly and stabilization of the Z lines. Involved in autophagosome formation. May play a role in chaperone-assisted selective autophagy (CASA) involved in Z lines maintenance in striated muscle under mechanical tension; may link the client-processing CASA chaperone machinery to a membrane-tethering and fusion complex providing autophagosome membranes. Involved in regulation of cell migration. May be a tumor suppressor. In Rattus norvegicus (Rat), this protein is Synaptopodin-2 (Synpo2).